The following is a 429-amino-acid chain: Histidine--tRNA ligase (429 aa).

This sequence belongs to the class-II aminoacyl-tRNA synthetase family. As to quaternary structure, homodimer.

It localises to the cytoplasm. The catalysed reaction is tRNA(His) + L-histidine + ATP = L-histidyl-tRNA(His) + AMP + diphosphate + H(+). This is Histidine--tRNA ligase from Prochlorococcus marinus (strain MIT 9515).